The following is a 61-amino-acid chain: Large ribosomal subunit protein eL29 (61 aa).

Over residues 1–26 the composition is skewed to basic residues; it reads MAKSKNHTNHNQNKKAHRNGIKRPQK. A disordered region spans residues 1–32; that stretch reads MAKSKNHTNHNQNKKAHRNGIKRPQKHRYDSL.

The protein belongs to the eukaryotic ribosomal protein eL29 family. Component of the large ribosomal subunit (LSU). Mature yeast ribosomes consist of a small (40S) and a large (60S) subunit. The 40S small subunit contains 1 molecule of ribosomal RNA (18S rRNA) and at least 33 different proteins. The large 60S subunit contains 3 rRNA molecules (25S, 5.8S and 5S rRNA) and at least 46 different proteins.

It is found in the cytoplasm. The protein localises to the nucleus. Its subcellular location is the nucleolus. Component of the ribosome, a large ribonucleoprotein complex responsible for the synthesis of proteins in the cell. The small ribosomal subunit (SSU) binds messenger RNAs (mRNAs) and translates the encoded message by selecting cognate aminoacyl-transfer RNA (tRNA) molecules. The large subunit (LSU) contains the ribosomal catalytic site termed the peptidyl transferase center (PTC), which catalyzes the formation of peptide bonds, thereby polymerizing the amino acids delivered by tRNAs into a polypeptide chain. The nascent polypeptides leave the ribosome through a tunnel in the LSU and interact with protein factors that function in enzymatic processing, targeting, and the membrane insertion of nascent chains at the exit of the ribosomal tunnel. In Schizosaccharomyces pombe (strain 972 / ATCC 24843) (Fission yeast), this protein is Large ribosomal subunit protein eL29 (rpl29).